A 259-amino-acid chain; its full sequence is Small ribosomal subunit protein uS2 (259 aa).

It belongs to the universal ribosomal protein uS2 family.

This chain is Small ribosomal subunit protein uS2, found in Streptococcus pneumoniae (strain CGSP14).